A 234-amino-acid chain; its full sequence is UPF0104 membrane protein MJ1078 (234 aa).

Transmembrane regions (helical) follow at residues 32-52, 70-90, 123-143, 164-184, and 198-218; these read VGTV…LLFI, IKWG…FLIV, LITL…FIFL, LTAI…LIYI, and VLIL…AIMF.

This sequence belongs to the UPF0104 family.

The protein resides in the cell membrane. This is UPF0104 membrane protein MJ1078 from Methanocaldococcus jannaschii (strain ATCC 43067 / DSM 2661 / JAL-1 / JCM 10045 / NBRC 100440) (Methanococcus jannaschii).